The sequence spans 240 residues: UDP-2,3-diacylglucosamine hydrolase (240 aa).

Mn(2+) is bound by residues aspartate 9, histidine 11, aspartate 43, asparagine 81, and histidine 116. Residue 81 to 82 (NR) participates in substrate binding. Substrate is bound by residues aspartate 124, serine 162, lysine 166, lysine 169, and histidine 197. Positions 197 and 199 each coordinate Mn(2+).

Belongs to the LpxH family. Requires Mn(2+) as cofactor.

It is found in the cell inner membrane. The enzyme catalyses UDP-2-N,3-O-bis[(3R)-3-hydroxytetradecanoyl]-alpha-D-glucosamine + H2O = 2-N,3-O-bis[(3R)-3-hydroxytetradecanoyl]-alpha-D-glucosaminyl 1-phosphate + UMP + 2 H(+). The protein operates within glycolipid biosynthesis; lipid IV(A) biosynthesis; lipid IV(A) from (3R)-3-hydroxytetradecanoyl-[acyl-carrier-protein] and UDP-N-acetyl-alpha-D-glucosamine: step 4/6. Hydrolyzes the pyrophosphate bond of UDP-2,3-diacylglucosamine to yield 2,3-diacylglucosamine 1-phosphate (lipid X) and UMP by catalyzing the attack of water at the alpha-P atom. Involved in the biosynthesis of lipid A, a phosphorylated glycolipid that anchors the lipopolysaccharide to the outer membrane of the cell. The chain is UDP-2,3-diacylglucosamine hydrolase from Neisseria meningitidis serogroup A / serotype 4A (strain DSM 15465 / Z2491).